A 230-amino-acid polypeptide reads, in one-letter code: Large ribosomal subunit protein uL3 (230 aa).

Disordered stretches follow at residues 125–149 and 210–230; these read QAIGPRSHGGGGGSKPIRQTGSLGD and PNPKNPVSLFVPNSDKEVKNE.

The protein belongs to the universal ribosomal protein uL3 family. In terms of assembly, part of the 50S ribosomal subunit. Forms a cluster with proteins L14 and L19.

Functionally, one of the primary rRNA binding proteins, it binds directly near the 3'-end of the 23S rRNA, where it nucleates assembly of the 50S subunit. The protein is Large ribosomal subunit protein uL3 of Mesomycoplasma hyopneumoniae (strain 232) (Mycoplasma hyopneumoniae).